The chain runs to 575 residues: Proline--tRNA ligase (575 aa).

It belongs to the class-II aminoacyl-tRNA synthetase family. ProS type 1 subfamily. In terms of assembly, homodimer.

The protein resides in the cytoplasm. The enzyme catalyses tRNA(Pro) + L-proline + ATP = L-prolyl-tRNA(Pro) + AMP + diphosphate. In terms of biological role, catalyzes the attachment of proline to tRNA(Pro) in a two-step reaction: proline is first activated by ATP to form Pro-AMP and then transferred to the acceptor end of tRNA(Pro). As ProRS can inadvertently accommodate and process non-cognate amino acids such as alanine and cysteine, to avoid such errors it has two additional distinct editing activities against alanine. One activity is designated as 'pretransfer' editing and involves the tRNA(Pro)-independent hydrolysis of activated Ala-AMP. The other activity is designated 'posttransfer' editing and involves deacylation of mischarged Ala-tRNA(Pro). The misacylated Cys-tRNA(Pro) is not edited by ProRS. In Pseudothermotoga lettingae (strain ATCC BAA-301 / DSM 14385 / NBRC 107922 / TMO) (Thermotoga lettingae), this protein is Proline--tRNA ligase.